Here is a 206-residue protein sequence, read N- to C-terminus: Imidazole glycerol phosphate synthase subunit HisH (206 aa).

Positions 1–206 (MIVIIDYGMG…LRILKNFGDM (206 aa)) constitute a Glutamine amidotransferase type-1 domain. The Nucleophile role is filled by C79. Catalysis depends on residues H188 and E190.

In terms of assembly, heterodimer of HisH and HisF.

Its subcellular location is the cytoplasm. The enzyme catalyses 5-[(5-phospho-1-deoxy-D-ribulos-1-ylimino)methylamino]-1-(5-phospho-beta-D-ribosyl)imidazole-4-carboxamide + L-glutamine = D-erythro-1-(imidazol-4-yl)glycerol 3-phosphate + 5-amino-1-(5-phospho-beta-D-ribosyl)imidazole-4-carboxamide + L-glutamate + H(+). The catalysed reaction is L-glutamine + H2O = L-glutamate + NH4(+). It participates in amino-acid biosynthesis; L-histidine biosynthesis; L-histidine from 5-phospho-alpha-D-ribose 1-diphosphate: step 5/9. Its function is as follows. IGPS catalyzes the conversion of PRFAR and glutamine to IGP, AICAR and glutamate. The HisH subunit catalyzes the hydrolysis of glutamine to glutamate and ammonia as part of the synthesis of IGP and AICAR. The resulting ammonia molecule is channeled to the active site of HisF. The protein is Imidazole glycerol phosphate synthase subunit HisH of Syntrophotalea carbinolica (strain DSM 2380 / NBRC 103641 / GraBd1) (Pelobacter carbinolicus).